The following is a 119-amino-acid chain: C-C motif chemokine 24 (119 aa).

A signal peptide spans methionine 1–serine 26. Cystine bridges form between cysteine 33-cysteine 58 and cysteine 34-cysteine 74. 2 N-linked (GlcNAc...) asparagine glycosylation sites follow: asparagine 54 and asparagine 115.

Belongs to the intercrine beta (chemokine CC) family.

The protein resides in the secreted. Its function is as follows. Chemotactic for resting T-lymphocytes, and eosinophils. Has lower chemotactic activity for neutrophils but none for monocytes and activated lymphocytes. Is a strong suppressor of colony formation by a multipotential hematopoietic progenitor cell line. Binds to CCR3. The polypeptide is C-C motif chemokine 24 (Canis lupus familiaris (Dog)).